The following is a 354-amino-acid chain: Protein sex-lethal (354 aa).

The segment at 1-20 is disordered; that stretch reads MYGNNNPGSNNNNGGYPPYG. RRM domains are found at residues 127-205 and 213-293; these read TNLI…YARP and TNLY…LAQE.

Part of a complex containing fl(2)d, Sxl and vir. Interacts with nito. Interacts with Unr; cooperates with Sxl to prevent translation of msl-2 transcripts. Interacts with how; promoting nuclear retention of msl-2 transcripts. As to expression, the embryo-specific isoform is not expressed in the pole cells, which are the progenitors of the germline.

Its subcellular location is the nucleus. The protein localises to the cytoplasm. Functionally, sex determination switch protein, which controls sexual development and dosage compensation in females. Sxl protein is only active in females: it is inactive in males throughout development. Acts as a mRNA-binding protein, which specifically binds to a subset of pre-mRNAs and mRNAs and regulates their processing and/or translation. Promotes sexual development by controlling the female-specific alternative splicing of the transformer (tra) pre-mRNA: binds tightly to a characteristic uridine-rich polypyrimidine tract at the non-sex specific 3' splice site in one of the tra introns, preventing the general splicing factor U2AF from binding to this site and forcing it to bind to the female-specific 3' splice site. Acts as an inhibitor of dosage compensation in females by preventing production of msl-2 protein, an essential component of the MSL complex, the complex that mediates X-chromosome dosage compensation. Specifially binds to uridine stretches in both the 5'- and 3'-UTR of msl-2 transcripts. Sxl first acts at the splicing level by promoting retention of an intron in the 5' UTR of msl-2 pre-mRNA. The retained intron contains Sxl-binding sites that are required for subsequent steps of repression: after msl-2 mRNA export into the cytoplasm, Sxl coordinates its translational repression by targeting early steps of translation initiation. Together with how, Sxl also prevents production of msl-2 protein by preventing nuclear export of msl-2 transcripts. The sequence is that of Protein sex-lethal from Drosophila subobscura (Fruit fly).